The primary structure comprises 130 residues: Small ribosomal subunit protein uS9 (130 aa).

It belongs to the universal ribosomal protein uS9 family.

The protein is Small ribosomal subunit protein uS9 of Yersinia pseudotuberculosis serotype O:1b (strain IP 31758).